Consider the following 263-residue polypeptide: Shikimate dehydrogenase (NADP(+)) (263 aa).

Residues 16-18 (SKS) and Thr65 contribute to the shikimate site. The Proton acceptor role is filled by Lys69. Shikimate is bound by residues Asn90 and Asp105. Residues 125-129 (GSGGS) and Leu208 each bind NADP(+). Tyr210 provides a ligand contact to shikimate. An NADP(+)-binding site is contributed by Gly230.

The protein belongs to the shikimate dehydrogenase family. Homodimer.

The enzyme catalyses shikimate + NADP(+) = 3-dehydroshikimate + NADPH + H(+). Its pathway is metabolic intermediate biosynthesis; chorismate biosynthesis; chorismate from D-erythrose 4-phosphate and phosphoenolpyruvate: step 4/7. In terms of biological role, involved in the biosynthesis of the chorismate, which leads to the biosynthesis of aromatic amino acids. Catalyzes the reversible NADPH linked reduction of 3-dehydroshikimate (DHSA) to yield shikimate (SA). In Helicobacter pylori (strain P12), this protein is Shikimate dehydrogenase (NADP(+)).